The following is a 329-amino-acid chain: Peroxidase 18 (329 aa).

A signal peptide spans 1-29 (MALQFFSCKPKYTFLSSLLLLLLLSSSVA). Disulfide bonds link cysteine 40–cysteine 116, cysteine 73–cysteine 78, cysteine 122–cysteine 325, and cysteine 201–cysteine 235. Histidine 71 acts as the Proton acceptor in catalysis. Ca(2+) contacts are provided by aspartate 72, valine 75, glycine 77, aspartate 79, and serine 81. Asparagine 87 is a glycosylation site (N-linked (GlcNAc...) asparagine). Residue isoleucine 164 coordinates substrate. Residue histidine 194 coordinates heme b. Threonine 195 is a binding site for Ca(2+). Residues aspartate 249, threonine 252, and aspartate 257 each coordinate Ca(2+).

This sequence belongs to the peroxidase family. Classical plant (class III) peroxidase subfamily. It depends on heme b as a cofactor. The cofactor is Ca(2+).

The protein resides in the secreted. It catalyses the reaction 2 a phenolic donor + H2O2 = 2 a phenolic radical donor + 2 H2O. Its function is as follows. Removal of H(2)O(2), oxidation of toxic reductants, biosynthesis and degradation of lignin, suberization, auxin catabolism, response to environmental stresses such as wounding, pathogen attack and oxidative stress. These functions might be dependent on each isozyme/isoform in each plant tissue. The polypeptide is Peroxidase 18 (PER18) (Arabidopsis thaliana (Mouse-ear cress)).